The following is an 89-amino-acid chain: Small ribosomal subunit protein uS14 (89 aa).

Belongs to the universal ribosomal protein uS14 family. As to quaternary structure, part of the 30S ribosomal subunit. Contacts proteins S3 and S10.

Its function is as follows. Binds 16S rRNA, required for the assembly of 30S particles and may also be responsible for determining the conformation of the 16S rRNA at the A site. The polypeptide is Small ribosomal subunit protein uS14 (Chlorobium phaeobacteroides (strain BS1)).